We begin with the raw amino-acid sequence, 366 residues long: Beta sliding clamp (366 aa).

This sequence belongs to the beta sliding clamp family. As to quaternary structure, forms a ring-shaped head-to-tail homodimer around DNA which binds and tethers DNA polymerases and other proteins to the DNA. The DNA replisome complex has a single clamp-loading complex (3 tau and 1 each of delta, delta', psi and chi subunits) which binds 3 Pol III cores (1 core on the leading strand and 2 on the lagging strand) each with a beta sliding clamp dimer. Additional proteins in the replisome are other copies of gamma, psi and chi, Ssb, DNA helicase and RNA primase.

It is found in the cytoplasm. Confers DNA tethering and processivity to DNA polymerases and other proteins. Acts as a clamp, forming a ring around DNA (a reaction catalyzed by the clamp-loading complex) which diffuses in an ATP-independent manner freely and bidirectionally along dsDNA. Initially characterized for its ability to contact the catalytic subunit of DNA polymerase III (Pol III), a complex, multichain enzyme responsible for most of the replicative synthesis in bacteria; Pol III exhibits 3'-5' exonuclease proofreading activity. The beta chain is required for initiation of replication as well as for processivity of DNA replication. The chain is Beta sliding clamp (dnaN) from Chlamydia muridarum (strain MoPn / Nigg).